A 138-amino-acid chain; its full sequence is Large ribosomal subunit protein uL16 (138 aa).

The protein belongs to the universal ribosomal protein uL16 family. Part of the 50S ribosomal subunit.

Its function is as follows. Binds 23S rRNA and is also seen to make contacts with the A and possibly P site tRNAs. The polypeptide is Large ribosomal subunit protein uL16 (Anaeromyxobacter dehalogenans (strain 2CP-C)).